A 579-amino-acid polypeptide reads, in one-letter code: General transcriptional corepressor tupA (579 aa).

A compositionally biased stretch (polar residues) spans 83–101; the sequence is NINASQRDLNSPSTFRSNS. Positions 83–258 are disordered; it reads NINASQRDLN…ENGKEKGTDW (176 aa). Low complexity-rich tracts occupy residues 109-128, 157-198, and 207-224; these read NNNN…NNNN, QQPG…LSPL, and MGNN…NNNN. Residues 227-256 show a composition bias toward basic and acidic residues; the sequence is KKPDMEEVKEEDRRRHDTEMSEENGKEKGT. WD repeat units follow at residues 279-319, 325-364, 367-406, 413-452, 455-494, 501-540, and 543-579; these read QHNS…HAFV, DGDL…IQHT, GHEL…CAFT, GPKN…FLER, GHLD…SRSR, GHKD…THMM, and GHKN…KYDS.

It belongs to the WD repeat TUP1 family. In terms of assembly, associates with trfA to form the trfA-tupA corepressor complex.

It is found in the nucleus. Acts as a component of the trfA-tupA corepressor complex which is involved in the repression of many genes in a wide variety of physiological processes. May also be involved in the derepression of at least some target genes. The complex is recruited to target genes by interaction with DNA-bound transcriptional repressors. The complex recruits histone deacetylases to produce a repressive chromatin structure, interacts with hypoacetylated N-terminal tails of histones H3 and H4 that have been programmed for repression by the action of histone deacetylases and interferes directly with the transcriptional machinery by associating with the RNA polymerase II mediator complex. The sequence is that of General transcriptional corepressor tupA (tupA) from Dictyostelium discoideum (Social amoeba).